We begin with the raw amino-acid sequence, 111 residues long: uncharacterized protein (111 aa).

This is an uncharacterized protein from Enterococcus faecalis (strain ATCC 700802 / V583).